The sequence spans 288 residues: Pyridoxal kinase PdxY (288 aa).

Substrate contacts are provided by residues Ser9 and 44–45 (TQ). Asp111, Glu148, and Lys181 together coordinate ATP. Asp224 contacts substrate.

The protein belongs to the pyridoxine kinase family. PdxY subfamily. Homodimer. Requires Mg(2+) as cofactor.

It carries out the reaction pyridoxal + ATP = pyridoxal 5'-phosphate + ADP + H(+). Its pathway is cofactor metabolism; pyridoxal 5'-phosphate salvage; pyridoxal 5'-phosphate from pyridoxal: step 1/1. Pyridoxal kinase involved in the salvage pathway of pyridoxal 5'-phosphate (PLP). Catalyzes the phosphorylation of pyridoxal to PLP. The protein is Pyridoxal kinase PdxY of Haemophilus influenzae (strain PittEE).